The primary structure comprises 1620 residues: MVKREINVCQQTWALLCKNLLRKKRLKRDTFLEFLYTALILLSLILFLQLHEVYDFSSLPDVDLGRIDSFNDSTFMIVYTPITPTTQRIMDRVSLVSYMTGRKILASPNEENMTELISMRFSDVVGVIFTNAYSYNLKFIKGARIPTIKEHQDHTAHCHSYGEIIYCGLSEFWRDGFVALQAAINAAIIEVTTNHSVMEEMMSLTGKYIKIDSFVGQEGTTTDCFLFFCIIRFSPLTYYISAGVTRERKKMKGLMAVMGLRDSAFWLSWGLLYGVIVFVVTLLSTTIVKLVQFVFLTGFMVIFSLFFFYGLSLISLSFLMSVLLKKSFLTDLVVFLLTVSCGSLGFTALYRYLPVSLEWLLSLLSPFAFMLGMVQLLRLDYDVNSNADPMGNPNEVIGTIFMLFFDGVFYLLLTFYFEKVLPSKSFHDKTYWHACKSHFFLIDYSFYIRTALDNETDYEFSDDSFEPVSMEFHGKEAIRIRNLTKDYIQKSKRTEALKDLTLDVYKGQITAILGHSGAGKSTLLNVLSGLCVPTKGWVTIHNNKLSEMTDLENISKLTGVCPQCNVQFDFLTVRENLRLFAKIKGIQAHEVDNEVQRVLLELDMKNTQNILVQNLSGGQKRKLTFGIAILGDPQIFLLDEPTAGLDPFSRHRVWNFLKERRADRVVLFSTQFMDEADILADRKVFISKGKLKCAGSSLFLKKKWGIGYHLSLQLSETCVHERITSLVKQHIPDSKLSAESEGKLSYILPLERTNKFPDLYRDLERSPDLGIENYGVSITTLTEVFLKLEGKSSIDQSDIGMTEDVQAGGARSPERFAEVEQLVSLLNGRCKMKGGMALWWQQLCAVTRLRFLKLKHERKSIVILILVLGIGLLHILSANIYRMVRQSDYCWELAPHMYFLTPGQQPQPPLTNLLIVNKTGAKIDDFIHSLEQQNIALEVDAFGTRNGTEDSQYNGAIILSGDEKNYNFTLACNTKRLNCFPVLVDIVSNGLLGLFAPSAHIQTDRSTFPEENDHRKFDYLAYFFLWVLLMACVPPYISMTSIDDYKNRAQFQLWISGLSPSAYWFGQALFEVPVYCALILSIFIAFYASAPPESKFTVGDLFIQILYVGGYAMSVIFMTYVISFIYRKGRKNSGLWSLCFYIVSFFSMCFMLIDYFRDISLFVLIALVPPATLGGCTLLHFENREFSEIIFEPEREYSYLFFLAPLLHFAIFVVILRCMERKFGMKTMRTDPVFRISPRSDRVFNNPEDPDGEDEDVSQERVWTANALTSADFQEKPAIIASCLRKEYKGKKKCFVLKSKKKIATRNISFCVRKGEVVGLLGHNGAGKSTSIKMITGETKPSAGQVLLKGSSTGDTPGFLGYCPQENALWLNLTVREHLEIFAAIKGMRKSDANVAIERLADALKLQDQLKSPVKTLSEGVKRKLCFVLSILGNPSVVLLDEPSTGMDPEGQQQMWQAIQATFSNTERGALLTTHYMAEAEAVCDRVAIMVSGRLRCIGSIQHLKSKFGKEYLLEMKVKTPSQVEPLNTEIMRLFPQAARQERYSSLMVYKLPREDVQPLSQAFFKLETVKQSFDLEEYSLSQSTLEQVFLELSKEQELDGFEEELDPSVKWKLLPQEEA.

7 helical membrane-spanning segments follow: residues 30-50 (TFLE…FLQL), 224-244 (CFLF…SAGV), 263-283 (SAFW…VTLL), 294-314 (VFLT…LSLI), 328-348 (FLTD…GFTA), 357-377 (LEWL…VQLL), and 397-417 (IGTI…TFYF). N-linked (GlcNAc...) asparagine glycans are attached at residues N454 and N482. The 236-residue stretch at 478 to 713 (IRIRNLTKDY…WGIGYHLSLQ (236 aa)) folds into the ABC transporter 1 domain. Position 514–521 (514–521 (GHSGAGKS)) interacts with ATP. Residues 861-881 (IVILILVLGIGLLHILSANIY) traverse the membrane as a helical segment. A glycan (N-linked (GlcNAc...) asparagine) is linked at N967. A run of 7 helical transmembrane segments spans residues 979 to 999 (CFPV…APSA), 1019 to 1039 (YLAY…YISM), 1068 to 1088 (ALFE…AFYA), 1105 to 1125 (ILYV…ISFI), 1133 to 1153 (SGLW…FMLI), 1159 to 1179 (ISLF…CTLL), and 1196 to 1216 (EYSY…VVIL). The ABC transporter 2 domain maps to 1284-1517 (LRKEYKGKKK…FGKEYLLEMK (234 aa)). Residue 1322-1329 (GHNGAGKS) coordinates ATP.

It belongs to the ABC transporter superfamily. ABCA family. As to expression, expressed in lung, heart, liver, skeletal muscle and testis. Highly expressed in the liver, and is also abundant in heart and skeletal muscle. Highly expressed in heart.

It is found in the cell membrane. The protein resides in the basolateral cell membrane. It carries out the reaction taurocholate(in) + ATP + H2O = taurocholate(out) + ADP + phosphate + H(+). The catalysed reaction is cholesterol(in) + ATP + H2O = cholesterol(out) + ADP + phosphate + H(+). Its activity is regulated as follows. Cholesterol efflux is increased by extracellularly applied taurocholate. Its function is as follows. Mediates cholesterol and taurocholate efflux. Through the interaction with ABCA1 potentiates the cholesterol efflux to lipid-free APOA1, in turn regulates high-density lipoprotein cholesterol levels. The polypeptide is ABC-type organic anion transporter ABCA8A (Mus musculus (Mouse)).